The sequence spans 744 residues: Integrator complex subunit 11 homolog (744 aa).

Positions 67, 69, 71, 72, 156, and 177 each coordinate Zn(2+). Residues 67–72 (HFHLDH) carry the HXHXDH motif motif. Glu-202 is a catalytic residue. Residue His-425 coordinates Zn(2+). The segment at 626–669 (NNNTSDDNNNNNNNNNNNNNNNNNNNNNNNNNNNNNNNNNNNNN) is disordered.

This sequence belongs to the metallo-beta-lactamase superfamily. RNA-metabolizing metallo-beta-lactamase-like family. INTS11 subfamily. Component of the Integrator complex. The core complex associates with protein phosphatase 2A subunits, to form the Integrator-PP2A (INTAC) complex. Requires Zn(2+) as cofactor.

It is found in the nucleus. The protein localises to the cytoplasm. In terms of biological role, RNA endonuclease component of the integrator complex, a multiprotein complex that terminates RNA polymerase II (Pol II) transcription in the promoter-proximal region of genes. The integrator complex provides a quality checkpoint during transcription elongation by driving premature transcription termination of transcripts that are unfavorably configured for transcriptional elongation: the complex terminates transcription by (1) catalyzing dephosphorylation of the C-terminal domain (CTD) of Pol II subunit polr2a, (2) degrading the exiting nascent RNA transcript via endonuclease activity and (3) promoting the release of Pol II from bound DNA. The integrator complex is also involved in terminating the synthesis of non-coding Pol II transcripts, such as enhancer RNAs (eRNAs), small nuclear RNAs (snRNAs), telomerase RNAs and long non-coding RNAs (lncRNAs). Within the integrator complex, INTS11 constitutes the RNA endonuclease subunit that degrades exiting nascent RNA transcripts. The sequence is that of Integrator complex subunit 11 homolog (ints11) from Dictyostelium discoideum (Social amoeba).